Reading from the N-terminus, the 599-residue chain is UvrABC system protein C (599 aa).

Residues 15 to 93 (EKPGCYQYFD…IKEYQPRYNV (79 aa)) form the GIY-YIG domain. Residues 207 to 242 (HRLVRMYRDRMQVYSEGLRFEEAQICKERIELLERY) enclose the UVR domain.

The protein belongs to the UvrC family. Interacts with UvrB in an incision complex.

The protein resides in the cytoplasm. Its function is as follows. The UvrABC repair system catalyzes the recognition and processing of DNA lesions. UvrC both incises the 5' and 3' sides of the lesion. The N-terminal half is responsible for the 3' incision and the C-terminal half is responsible for the 5' incision. The polypeptide is UvrABC system protein C (Porphyromonas gingivalis (strain ATCC BAA-308 / W83)).